A 334-amino-acid polypeptide reads, in one-letter code: Cytosolic Fe-S cluster assembly factor NUBP1 homolog (334 aa).

The interval 1-24 (MSSAEVTAAAKPADAPEHCPGTAS) is disordered. [4Fe-4S] cluster is bound by residues cysteine 19, cysteine 33, cysteine 36, and cysteine 42. 72–79 (GKGGVGKS) contributes to the ATP binding site. 2 residues coordinate [4Fe-4S] cluster: cysteine 247 and cysteine 250.

It belongs to the Mrp/NBP35 ATP-binding proteins family. NUBP1/NBP35 subfamily. In terms of assembly, heterotetramer of 2 NUBP1 and 2 NUBP2 chains. Requires [4Fe-4S] cluster as cofactor.

It is found in the cytoplasm. In terms of biological role, component of the cytosolic iron-sulfur (Fe/S) protein assembly (CIA) machinery. Required for maturation of extramitochondrial Fe-S proteins. The NUBP1-NUBP2 heterotetramer forms a Fe-S scaffold complex, mediating the de novo assembly of an Fe-S cluster and its transfer to target apoproteins. This chain is Cytosolic Fe-S cluster assembly factor NUBP1 homolog, found in Culex quinquefasciatus (Southern house mosquito).